A 262-amino-acid chain; its full sequence is Aminoglycoside 3'-phosphotransferase (262 aa).

Residue Asp187 is the Proton acceptor of the active site.

Belongs to the aminoglycoside phosphotransferase family. In terms of assembly, monomer.

It is found in the cytoplasm. The enzyme catalyses kanamycin A + ATP = kanamycin 3'-phosphate + ADP + H(+). Its function is as follows. Resistance to butirosin and structurally-related aminoglycosides, including kanamycin and amikacin. This Niallia circulans (Bacillus circulans) protein is Aminoglycoside 3'-phosphotransferase.